Here is a 170-residue protein sequence, read N- to C-terminus: 3-hydroxydecanoyl-[acyl-carrier-protein] dehydratase (170 aa).

Residue His69 is part of the active site.

It belongs to the thioester dehydratase family. FabA subfamily. In terms of assembly, homodimer.

The protein localises to the cytoplasm. It catalyses the reaction a (3R)-hydroxyacyl-[ACP] = a (2E)-enoyl-[ACP] + H2O. It carries out the reaction (3R)-hydroxydecanoyl-[ACP] = (2E)-decenoyl-[ACP] + H2O. The catalysed reaction is (2E)-decenoyl-[ACP] = (3Z)-decenoyl-[ACP]. It participates in lipid metabolism; fatty acid biosynthesis. Functionally, necessary for the introduction of cis unsaturation into fatty acids. Catalyzes the dehydration of (3R)-3-hydroxydecanoyl-ACP to E-(2)-decenoyl-ACP and then its isomerization to Z-(3)-decenoyl-ACP. Can catalyze the dehydratase reaction for beta-hydroxyacyl-ACPs with saturated chain lengths up to 16:0, being most active on intermediate chain length. This Idiomarina loihiensis (strain ATCC BAA-735 / DSM 15497 / L2-TR) protein is 3-hydroxydecanoyl-[acyl-carrier-protein] dehydratase.